The chain runs to 454 residues: MRRPLRRVTVVLLWVALAIGVAWFYDYRRSMQSLWKIRQHGKIVVLTENNANSYYIYKETPMGFEYDLAKAFAGHLGVDLEVKTPGWDALFASLQRGDGDFIAASMTHTRKREQYADFSEPYLSVRQHLILHKSDHSIVTPAGLAGRTVHVREDTTYQQRLEALQADGIDLQLVLHRNTPTEELIEQVAKRQIDITVADSAIALLNRRYYPDIRIAFPIEKEQPLAWAVRKGDRGLRTEINRFFDEIKENGTFTRIYNRYYTAVDTFDYVDVKKFHQRIYTRLPRFRPLIEKAADRHGFDWQMIAAVIYQESHFDPFAQSHTGVKGLMQLTRVTAEEMGVTDRFDFEQNITAGVAYLAKLRHRFDDIEDPRTRLLFALASYNIGYGHVRDAQQIAKNMGMDPNRWQSLKEVLPLLRNREYYADTTYGYARGNEAVRYIERILTYYDILKQKKAV.

The N-terminal stretch at 1 to 24 is a signal peptide; the sequence is MRRPLRRVTVVLLWVALAIGVAWF. The non-LT domain stretch occupies residues 25–265; it reads YDYRRSMQSL…IYNRYYTAVD (241 aa). The interval 266–454 is LT domain; that stretch reads TFDYVDVKKF…YDILKQKKAV (189 aa). Residue E311 is part of the active site.

In the N-terminal section; belongs to the bacterial solute-binding protein 3 family. The protein in the C-terminal section; belongs to the transglycosylase Slt family.

It localises to the cell outer membrane. The enzyme catalyses Exolytic cleavage of the (1-&gt;4)-beta-glycosidic linkage between N-acetylmuramic acid (MurNAc) and N-acetylglucosamine (GlcNAc) residues in peptidoglycan, from either the reducing or the non-reducing ends of the peptidoglycan chains, with concomitant formation of a 1,6-anhydrobond in the MurNAc residue.. Functionally, murein-degrading enzyme that degrades murein glycan strands and insoluble, high-molecular weight murein sacculi, with the concomitant formation of a 1,6-anhydromuramoyl product. Lytic transglycosylases (LTs) play an integral role in the metabolism of the peptidoglycan (PG) sacculus. Their lytic action creates space within the PG sacculus to allow for its expansion as well as for the insertion of various structures such as secretion systems and flagella. This is Membrane-bound lytic murein transglycosylase F from Desulfosudis oleivorans (strain DSM 6200 / JCM 39069 / Hxd3) (Desulfococcus oleovorans).